The following is a 434-amino-acid chain: Asparagine--tRNA ligase (434 aa).

It belongs to the class-II aminoacyl-tRNA synthetase family. As to quaternary structure, homodimer.

The protein resides in the cytoplasm. The enzyme catalyses tRNA(Asn) + L-asparagine + ATP = L-asparaginyl-tRNA(Asn) + AMP + diphosphate + H(+). This chain is Asparagine--tRNA ligase, found in Oenococcus oeni (strain ATCC BAA-331 / PSU-1).